The sequence spans 93 residues: Small ribosomal subunit protein bS20 (93 aa).

Positions 1-18 (MPLHKSAEKRLRQSEKRN) are enriched in basic and acidic residues. Positions 1–25 (MPLHKSAEKRLRQSEKRNARNRARK) are disordered.

It belongs to the bacterial ribosomal protein bS20 family.

In terms of biological role, binds directly to 16S ribosomal RNA. The protein is Small ribosomal subunit protein bS20 of Chlorobium chlorochromatii (strain CaD3).